The sequence spans 430 residues: Dihydrolipoyllysine-residue acetyltransferase component of pyruvate dehydrogenase complex (430 aa).

One can recognise a Lipoyl-binding domain in the interval 2–77 (AFEFRLPDIG…VVGDVIVKID (76 aa)). The residue at position 43 (Lys43) is an N6-lipoyllysine. The tract at residues 80–122 (DAEDMQFKGHDDDSSSKEEPAKEEAPAEQAPVATQTEEVDENR) is disordered. Over residues 84–104 (MQFKGHDDDSSSKEEPAKEEA) the composition is skewed to basic and acidic residues. In terms of domain architecture, Peripheral subunit-binding (PSBD) spans 125–162 (KAMPSVRKYAREKGVNIKAVSGSGKNGRITKEDVDAYL). The segment at 164 to 199 (GGAPTASNESAASATSEEVAETPAAPAAVSLEGDFP) is disordered. Residues 166–193 (APTASNESAASATSEEVAETPAAPAAVS) show a composition bias toward low complexity. The active site involves His401.

This sequence belongs to the 2-oxoacid dehydrogenase family. In terms of assembly, forms a 24-polypeptide structural core with octahedral symmetry. (R)-lipoate is required as a cofactor.

The enzyme catalyses N(6)-[(R)-dihydrolipoyl]-L-lysyl-[protein] + acetyl-CoA = N(6)-[(R)-S(8)-acetyldihydrolipoyl]-L-lysyl-[protein] + CoA. In terms of biological role, the pyruvate dehydrogenase complex catalyzes the overall conversion of pyruvate to acetyl-CoA and CO(2). It contains multiple copies of three enzymatic components: pyruvate dehydrogenase (E1), dihydrolipoamide acetyltransferase (E2) and lipoamide dehydrogenase (E3). The chain is Dihydrolipoyllysine-residue acetyltransferase component of pyruvate dehydrogenase complex (pdhC) from Staphylococcus aureus (strain Mu50 / ATCC 700699).